A 142-amino-acid polypeptide reads, in one-letter code: ATP synthase epsilon chain (142 aa).

Belongs to the ATPase epsilon chain family. As to quaternary structure, F-type ATPases have 2 components, CF(1) - the catalytic core - and CF(0) - the membrane proton channel. CF(1) has five subunits: alpha(3), beta(3), gamma(1), delta(1), epsilon(1). CF(0) has three main subunits: a, b and c.

Its subcellular location is the cell membrane. Produces ATP from ADP in the presence of a proton gradient across the membrane. The protein is ATP synthase epsilon chain of Lactiplantibacillus plantarum (strain ATCC BAA-793 / NCIMB 8826 / WCFS1) (Lactobacillus plantarum).